The sequence spans 218 residues: Hypoxanthine-guanine phosphoribosyltransferase (218 aa).

Ala2 is modified (N-acetylalanine). Residue Lys69 participates in GMP binding. Residue Lys103 is modified to N6-acetyllysine. Lys115 is covalently cross-linked (Glycyl lysine isopeptide (Lys-Gly) (interchain with G-Cter in SUMO1); alternate). Lys115 is covalently cross-linked (Glycyl lysine isopeptide (Lys-Gly) (interchain with G-Cter in SUMO2); alternate). Residues 134–142 (EDIIDTGKT), Lys166, 186–188 (KFV), and Asp194 contribute to the GMP site. Asp138 serves as the catalytic Proton acceptor. The residue at position 142 (Thr142) is a Phosphothreonine. Residue Asp194 participates in Mg(2+) binding.

Belongs to the purine/pyrimidine phosphoribosyltransferase family. Homotetramer. The cofactor is Mg(2+).

The protein resides in the cytoplasm. It catalyses the reaction IMP + diphosphate = hypoxanthine + 5-phospho-alpha-D-ribose 1-diphosphate. It carries out the reaction GMP + diphosphate = guanine + 5-phospho-alpha-D-ribose 1-diphosphate. Its pathway is purine metabolism; IMP biosynthesis via salvage pathway; IMP from hypoxanthine: step 1/1. In terms of biological role, converts guanine to guanosine monophosphate, and hypoxanthine to inosine monophosphate. Transfers the 5-phosphoribosyl group from 5-phosphoribosylpyrophosphate onto the purine. Plays a central role in the generation of purine nucleotides through the purine salvage pathway. The protein is Hypoxanthine-guanine phosphoribosyltransferase (HPRT1) of Bos taurus (Bovine).